The following is a 535-amino-acid chain: Beta-amylase 1, chloroplastic (535 aa).

Residues 1–36 (MALNLAQSAAAAACFATAGDARRAASVVAMPSSSSS) constitute a chloroplast transit peptide. Substrate contacts are provided by aspartate 115, histidine 155, and aspartate 163. The active-site Proton donor is glutamate 247. Positions 361, 366, and 408 each coordinate substrate. Residue glutamate 446 is the Proton acceptor of the active site. Residues 447–448 (NA) and arginine 480 contribute to the substrate site.

The protein belongs to the glycosyl hydrolase 14 family.

It is found in the plastid. Its subcellular location is the chloroplast. It catalyses the reaction Hydrolysis of (1-&gt;4)-alpha-D-glucosidic linkages in polysaccharides so as to remove successive maltose units from the non-reducing ends of the chains.. Its function is as follows. Possesses beta-amylase activity in vitro. May be involved in cold resistance by mediating the accumulation of maltose upon freezing stress, thus contributing to the protection of membranes. The sequence is that of Beta-amylase 1, chloroplastic from Oryza sativa subsp. japonica (Rice).